A 563-amino-acid polypeptide reads, in one-letter code: Arginine--tRNA ligase (563 aa).

The 'HIGH' region motif lies at 123-133; sequence PNIAKDMHVGH.

The protein belongs to the class-I aminoacyl-tRNA synthetase family. In terms of assembly, monomer.

It localises to the cytoplasm. The catalysed reaction is tRNA(Arg) + L-arginine + ATP = L-arginyl-tRNA(Arg) + AMP + diphosphate. The protein is Arginine--tRNA ligase of Chlamydia trachomatis serovar A (strain ATCC VR-571B / DSM 19440 / HAR-13).